The following is a 726-amino-acid chain: uncharacterized protein (726 aa).

The region spanning 10–135 (MRISWVVAFI…LLDFVETHLN (126 aa)) is the Thioredoxin domain. Disordered stretches follow at residues 133–153 (HLNPDTDPDIPSDEDVLTDED) and 227–280 (VTSV…NPTG). The segment covering 138–153 (TDPDIPSDEDVLTDED) has biased composition (acidic residues). A helical membrane pass occupies residues 675–695 (IRVLYMVLGIVTVGILVWYFS). Ser708 is subject to Phosphoserine.

Its subcellular location is the membrane. This is an uncharacterized protein from Schizosaccharomyces pombe (strain 972 / ATCC 24843) (Fission yeast).